The following is a 183-amino-acid chain: Thioredoxin/glutathione peroxidase BtuE (183 aa).

Cys37 is a catalytic residue.

This sequence belongs to the glutathione peroxidase family. BtuE subfamily.

The protein resides in the periplasm. It carries out the reaction 2 glutathione + H2O2 = glutathione disulfide + 2 H2O. It catalyses the reaction a hydroperoxide + [thioredoxin]-dithiol = an alcohol + [thioredoxin]-disulfide + H2O. Non-specific peroxidase that can use thioredoxin or glutathione as a reducing agent. In vitro, utilizes preferentially thioredoxin A to decompose hydrogen peroxide as well as cumene-, tert-butyl-, and linoleic acid hydroperoxides, suggesting that it may have one or more organic hydroperoxide as its physiological substrate. This is Thioredoxin/glutathione peroxidase BtuE from Escherichia coli (strain K12).